The sequence spans 208 residues: Uracil phosphoribosyltransferase (208 aa).

Residues Arg78, Arg103, and 130-138 contribute to the 5-phospho-alpha-D-ribose 1-diphosphate site; that span reads DPMLATGHS. Uracil is bound by residues Ile193 and 198-200; that span reads GDA. Asp199 contributes to the 5-phospho-alpha-D-ribose 1-diphosphate binding site.

It belongs to the UPRTase family. Requires Mg(2+) as cofactor.

The enzyme catalyses UMP + diphosphate = 5-phospho-alpha-D-ribose 1-diphosphate + uracil. Its pathway is pyrimidine metabolism; UMP biosynthesis via salvage pathway; UMP from uracil: step 1/1. With respect to regulation, allosterically activated by GTP. Catalyzes the conversion of uracil and 5-phospho-alpha-D-ribose 1-diphosphate (PRPP) to UMP and diphosphate. This chain is Uracil phosphoribosyltransferase, found in Brucella anthropi (strain ATCC 49188 / DSM 6882 / CCUG 24695 / JCM 21032 / LMG 3331 / NBRC 15819 / NCTC 12168 / Alc 37) (Ochrobactrum anthropi).